The following is a 354-amino-acid chain: MDMMLLVQGACCSNQWLAAVLLSLCCLLPSCLPAGQSVDFPWAAVDNMMVRKGDTAVLRCYLEDGASKGAWLNRSSIIFAGGDKWSVDPRVSISTLNKRDYSLQIQNVDVTDDGPYTCSVQTQHTPRTMQVHLTVQVPPKIYDISNDMTVNEGTNVTLTCLATGKPEPSISWRHISPSAKPFENGQYLDIYGITRDQAGEYECSAENDVSFPDVRKVKVVVNFAPTIQEIKSGTVTPGRSGLIRCEGAGVPPPAFEWYKGEKKLFNGQQGIIIQNFSTRSILTVTNVTQEHFGNYTCVAANKLGTTNASLPLNPPSTAQYGITGSADVLFSCWYLVLTLSSFTSIFYLKNAILQ.

The signal sequence occupies residues 1 to 37 (MDMMLLVQGACCSNQWLAAVLLSLCCLLPSCLPAGQS). Ig-like C2-type domains are found at residues 38–134 (VDFP…VHLT), 139–221 (PKIY…KVVV), and 225–313 (PTIQ…LPLN). The cysteines at positions 60 and 118 are disulfide-linked. Residues N73 and N155 are each glycosylated (N-linked (GlcNAc...) asparagine). Cystine bridges form between C160–C203 and C245–C297. Position 187 is a phosphotyrosine (Y187). 4 N-linked (GlcNAc...) asparagine glycosylation sites follow: N275, N286, N294, and N307. G324 carries GPI-anchor amidated glycine lipidation. Positions 325-354 (SADVLFSCWYLVLTLSSFTSIFYLKNAILQ) are cleaved as a propeptide — removed in mature form.

It belongs to the immunoglobulin superfamily. IgLON family.

The protein resides in the cell membrane. In terms of biological role, may be involved in cell-adhesion. May function as a trans-neural growth-promoting factor in regenerative axon sprouting in the mammalian brain. This Homo sapiens (Human) protein is Neuronal growth regulator 1 (NEGR1).